The chain runs to 316 residues: 4-hydroxy-3-methylbut-2-enyl diphosphate reductase (316 aa).

Cysteine 12 is a [4Fe-4S] cluster binding site. Positions 41 and 74 each coordinate (2E)-4-hydroxy-3-methylbut-2-enyl diphosphate. Positions 41 and 74 each coordinate dimethylallyl diphosphate. 2 residues coordinate isopentenyl diphosphate: histidine 41 and histidine 74. Cysteine 96 is a [4Fe-4S] cluster binding site. Residue histidine 124 coordinates (2E)-4-hydroxy-3-methylbut-2-enyl diphosphate. Histidine 124 is a dimethylallyl diphosphate binding site. Residue histidine 124 participates in isopentenyl diphosphate binding. Glutamate 126 serves as the catalytic Proton donor. Threonine 167 is a binding site for (2E)-4-hydroxy-3-methylbut-2-enyl diphosphate. Residue cysteine 197 participates in [4Fe-4S] cluster binding. Residues serine 225, serine 226, asparagine 227, and serine 269 each contribute to the (2E)-4-hydroxy-3-methylbut-2-enyl diphosphate site. Dimethylallyl diphosphate is bound by residues serine 225, serine 226, asparagine 227, and serine 269. Residues serine 225, serine 226, asparagine 227, and serine 269 each contribute to the isopentenyl diphosphate site.

Belongs to the IspH family. Homodimer. [4Fe-4S] cluster serves as cofactor.

It catalyses the reaction isopentenyl diphosphate + 2 oxidized [2Fe-2S]-[ferredoxin] + H2O = (2E)-4-hydroxy-3-methylbut-2-enyl diphosphate + 2 reduced [2Fe-2S]-[ferredoxin] + 2 H(+). The enzyme catalyses dimethylallyl diphosphate + 2 oxidized [2Fe-2S]-[ferredoxin] + H2O = (2E)-4-hydroxy-3-methylbut-2-enyl diphosphate + 2 reduced [2Fe-2S]-[ferredoxin] + 2 H(+). The protein operates within isoprenoid biosynthesis; dimethylallyl diphosphate biosynthesis; dimethylallyl diphosphate from (2E)-4-hydroxy-3-methylbutenyl diphosphate: step 1/1. It functions in the pathway isoprenoid biosynthesis; isopentenyl diphosphate biosynthesis via DXP pathway; isopentenyl diphosphate from 1-deoxy-D-xylulose 5-phosphate: step 6/6. Catalyzes the conversion of 1-hydroxy-2-methyl-2-(E)-butenyl 4-diphosphate (HMBPP) into a mixture of isopentenyl diphosphate (IPP) and dimethylallyl diphosphate (DMAPP). Acts in the terminal step of the DOXP/MEP pathway for isoprenoid precursor biosynthesis. The sequence is that of 4-hydroxy-3-methylbut-2-enyl diphosphate reductase from Salmonella typhi.